A 422-amino-acid chain; its full sequence is MTVKTTVSTKDIDEAFLRLKDIVKETPLQLDHYLSQKYDCKVYLKREDLQWVRSFKLRGAYNAISVLSDEAKSKGITCASAGNHAQGVAYTAKKLNLNAVIFMPVTTPLQKVNQVKFFGNSNVEVVLTGDTFDHCLAEALTYTSEHQMNFIDPFNNVHTISGQGTLAKEMLEQAKSDNVNFDYLFAAIGGGGLISGISTYFKTYSPTTKIIGVEPSGASSMYESVVVNNQVVTLPNIDKFVDGASVARVGDITFEIAKENVDDYVQVDEGAVCSTILDMYSKQAIVAEPAGALSVSALENYKDHIKGKTVVCVISGGNNDINRMKEIEERSLLYEEMKHYFILNFPQRPGALREFVNDVLGPQDDITKFEYLKKSSQNTGTVIIGIQLKDHDDLIQLKQRVNHFDPSNIYINENKMLYSLLI.

An N6-(pyridoxal phosphate)lysine modification is found at lysine 56. Residues asparagine 83, 189–193 (GGGGL), and serine 315 contribute to the pyridoxal 5'-phosphate site. Residues 339–413 (HYFILNFPQR…FDPSNIYINE (75 aa)) enclose the ACT-like domain.

This sequence belongs to the serine/threonine dehydratase family. In terms of assembly, homotetramer. The cofactor is pyridoxal 5'-phosphate.

It carries out the reaction L-threonine = 2-oxobutanoate + NH4(+). The protein operates within amino-acid biosynthesis; L-isoleucine biosynthesis; 2-oxobutanoate from L-threonine: step 1/1. In terms of biological role, catalyzes the anaerobic formation of alpha-ketobutyrate and ammonia from threonine in a two-step reaction. The first step involved a dehydration of threonine and a production of enamine intermediates (aminocrotonate), which tautomerizes to its imine form (iminobutyrate). Both intermediates are unstable and short-lived. The second step is the nonenzymatic hydrolysis of the enamine/imine intermediates to form 2-ketobutyrate and free ammonia. In the low water environment of the cell, the second step is accelerated by RidA. This chain is L-threonine dehydratase biosynthetic IlvA (ilvA), found in Staphylococcus aureus (strain NCTC 8325 / PS 47).